A 138-amino-acid polypeptide reads, in one-letter code: Transcription antitermination protein NusB (138 aa).

Belongs to the NusB family.

Functionally, involved in transcription antitermination. Required for transcription of ribosomal RNA (rRNA) genes. Binds specifically to the boxA antiterminator sequence of the ribosomal RNA (rrn) operons. This Coxiella burnetii (strain Dugway 5J108-111) protein is Transcription antitermination protein NusB.